The sequence spans 602 residues: Elongation factor 4 (602 aa).

Residues 7-188 enclose the tr-type G domain; it reads ENIRNFSIIA…AIIELIPPPK (182 aa). Residues 19-24 and 135-138 each bind GTP; these read DHGKST and NKID.

The protein belongs to the TRAFAC class translation factor GTPase superfamily. Classic translation factor GTPase family. LepA subfamily.

The protein localises to the cell inner membrane. It catalyses the reaction GTP + H2O = GDP + phosphate + H(+). Its function is as follows. Required for accurate and efficient protein synthesis under certain stress conditions. May act as a fidelity factor of the translation reaction, by catalyzing a one-codon backward translocation of tRNAs on improperly translocated ribosomes. Back-translocation proceeds from a post-translocation (POST) complex to a pre-translocation (PRE) complex, thus giving elongation factor G a second chance to translocate the tRNAs correctly. Binds to ribosomes in a GTP-dependent manner. The sequence is that of Elongation factor 4 from Chlamydia caviae (strain ATCC VR-813 / DSM 19441 / 03DC25 / GPIC) (Chlamydophila caviae).